We begin with the raw amino-acid sequence, 740 residues long: Phosphoribosylformylglycinamidine synthase subunit PurL (740 aa).

The active site involves His-53. Positions 56 and 95 each coordinate ATP. Residue Glu-97 coordinates Mg(2+). Substrate is bound by residues 98–101 (SHNH) and Arg-120. The active-site Proton acceptor is His-99. Residue Asp-121 coordinates Mg(2+). Gln-244 is a substrate binding site. Residue Asp-274 coordinates Mg(2+). A substrate-binding site is contributed by 318–320 (ESQ). Asp-501 and Gly-538 together coordinate ATP. Residue Asn-539 coordinates Mg(2+). Substrate is bound at residue Ser-541.

Belongs to the FGAMS family. In terms of assembly, monomer. Part of the FGAM synthase complex composed of 1 PurL, 1 PurQ and 2 PurS subunits.

It localises to the cytoplasm. It catalyses the reaction N(2)-formyl-N(1)-(5-phospho-beta-D-ribosyl)glycinamide + L-glutamine + ATP + H2O = 2-formamido-N(1)-(5-O-phospho-beta-D-ribosyl)acetamidine + L-glutamate + ADP + phosphate + H(+). The protein operates within purine metabolism; IMP biosynthesis via de novo pathway; 5-amino-1-(5-phospho-D-ribosyl)imidazole from N(2)-formyl-N(1)-(5-phospho-D-ribosyl)glycinamide: step 1/2. Part of the phosphoribosylformylglycinamidine synthase complex involved in the purines biosynthetic pathway. Catalyzes the ATP-dependent conversion of formylglycinamide ribonucleotide (FGAR) and glutamine to yield formylglycinamidine ribonucleotide (FGAM) and glutamate. The FGAM synthase complex is composed of three subunits. PurQ produces an ammonia molecule by converting glutamine to glutamate. PurL transfers the ammonia molecule to FGAR to form FGAM in an ATP-dependent manner. PurS interacts with PurQ and PurL and is thought to assist in the transfer of the ammonia molecule from PurQ to PurL. This chain is Phosphoribosylformylglycinamidine synthase subunit PurL, found in Lactobacillus delbrueckii subsp. bulgaricus (strain ATCC 11842 / DSM 20081 / BCRC 10696 / JCM 1002 / NBRC 13953 / NCIMB 11778 / NCTC 12712 / WDCM 00102 / Lb 14).